A 238-amino-acid chain; its full sequence is Phosphoribosylaminoimidazole-succinocarboxamide synthase (238 aa).

It belongs to the SAICAR synthetase family.

It carries out the reaction 5-amino-1-(5-phospho-D-ribosyl)imidazole-4-carboxylate + L-aspartate + ATP = (2S)-2-[5-amino-1-(5-phospho-beta-D-ribosyl)imidazole-4-carboxamido]succinate + ADP + phosphate + 2 H(+). It functions in the pathway purine metabolism; IMP biosynthesis via de novo pathway; 5-amino-1-(5-phospho-D-ribosyl)imidazole-4-carboxamide from 5-amino-1-(5-phospho-D-ribosyl)imidazole-4-carboxylate: step 1/2. The protein is Phosphoribosylaminoimidazole-succinocarboxamide synthase of Desulfitobacterium hafniense (strain Y51).